We begin with the raw amino-acid sequence, 622 residues long: Phosphoenolpyruvate carboxykinase [GTP] (622 aa).

Substrate is bound by residues arginine 86 and tyrosine 220–glycine 222. Residues lysine 229 and histidine 248 each coordinate Mn(2+). Position 270 (serine 270) interacts with substrate. Methionine 271–serine 276 contributes to the GTP binding site. The active site involves cysteine 272. Aspartate 289 is a Mn(2+) binding site. The span at glutamate 360–glutamate 374 shows a compositional bias: basic and acidic residues. The tract at residues glutamate 360–serine 381 is disordered. Residue asparagine 384–arginine 386 coordinates substrate. Arginine 386 and arginine 418 together coordinate GTP.

Belongs to the phosphoenolpyruvate carboxykinase [GTP] family. The cofactor is Mn(2+).

It is found in the cytoplasm. It catalyses the reaction oxaloacetate + GTP = phosphoenolpyruvate + GDP + CO2. It functions in the pathway carbohydrate biosynthesis; gluconeogenesis. Its function is as follows. Catalyzes the conversion of oxaloacetate (OAA) to phosphoenolpyruvate (PEP), the rate-limiting step in the metabolic pathway that produces glucose from lactate and other precursors derived from the citric acid cycle. This Thermococcus sibiricus (strain DSM 12597 / MM 739) protein is Phosphoenolpyruvate carboxykinase [GTP].